Here is a 147-residue protein sequence, read N- to C-terminus: Large ribosomal subunit protein uL15 (147 aa).

The segment covering 1–15 (MKLHELKPAKGAVKE) has biased composition (basic and acidic residues). The interval 1–47 (MKLHELKPAKGAVKEVKRKGRGRATGNGKTAGRGHNGQNSRSGGGVR) is disordered. Over residues 23 to 35 (RATGNGKTAGRGH) the composition is skewed to gly residues.

Belongs to the universal ribosomal protein uL15 family. As to quaternary structure, part of the 50S ribosomal subunit.

Its function is as follows. Binds to the 23S rRNA. This Alkaliphilus metalliredigens (strain QYMF) protein is Large ribosomal subunit protein uL15.